Reading from the N-terminus, the 154-residue chain is Ribonuclease H (154 aa).

Residues 5 to 146 (EQNIVYLYCD…ADELANRGID (142 aa)) form the RNase H type-1 domain. D14, E52, D74, and D138 together coordinate Mg(2+).

The protein belongs to the RNase H family. As to quaternary structure, monomer. Mg(2+) is required as a cofactor.

Its subcellular location is the cytoplasm. The catalysed reaction is Endonucleolytic cleavage to 5'-phosphomonoester.. In terms of biological role, endonuclease that specifically degrades the RNA of RNA-DNA hybrids. In Coxiella burnetii (strain RSA 331 / Henzerling II), this protein is Ribonuclease H.